A 355-amino-acid polypeptide reads, in one-letter code: Elongation factor Ts (355 aa).

Residues 82–85 (TDFV) are involved in Mg(2+) ion dislocation from EF-Tu.

The protein belongs to the EF-Ts family.

The protein resides in the cytoplasm. Its function is as follows. Associates with the EF-Tu.GDP complex and induces the exchange of GDP to GTP. It remains bound to the aminoacyl-tRNA.EF-Tu.GTP complex up to the GTP hydrolysis stage on the ribosome. This Helicobacter acinonychis (strain Sheeba) protein is Elongation factor Ts.